A 332-amino-acid polypeptide reads, in one-letter code: MLALGKLLDLTLAGREPTEKIQLTADGTRLHWLAEGALEVTPIGARDNGVDLLLSAGIHGNETAPIELLERLVRKLASGELKPAARVLFLLGNPEAIRRGERFVEQDMNRLFNGRHEEGSGNEAFRAAELERLAQVFFSRGERDRLHYDLHTAIRGSRIEQFALYPWAEGREHSRAELARLRDAGIEAVLLQNKPGITFSAYTYGQLGAEAFTLELGKARPFGQNQQVNLERLERRLEMLIDGSEERPDGAHLDGLKLFSVSREVIKHSDHFRLHLDDDVANFTELSPGYLLAEDIGGTRWVVDEVGARIIFPNPRVKNGLRAGILVVPAKL.

Positions 59, 62, and 151 each coordinate Zn(2+). Residue E215 is part of the active site.

Belongs to the AspA/AstE family. Succinylglutamate desuccinylase subfamily. Zn(2+) is required as a cofactor.

The enzyme catalyses N-succinyl-L-glutamate + H2O = L-glutamate + succinate. It functions in the pathway amino-acid degradation; L-arginine degradation via AST pathway; L-glutamate and succinate from L-arginine: step 5/5. In terms of biological role, transforms N(2)-succinylglutamate into succinate and glutamate. The sequence is that of Succinylglutamate desuccinylase from Pseudomonas paraeruginosa (strain DSM 24068 / PA7) (Pseudomonas aeruginosa (strain PA7)).